Here is a 460-residue protein sequence, read N- to C-terminus: Pyruvate dehydrogenase E1 component subunit beta (460 aa).

The region spanning 2–78 is the Lipoyl-binding domain; the sequence is PVEILMPALS…KVNTPIAVLL (77 aa). Lys-43 carries the N6-lipoyllysine modification. The disordered stretch occupies residues 91-131; it reads KTEAPKAETPKPAAAEAPAASAAPVAAQPKADVPSDPAIPA. The segment covering 100 to 121 has biased composition (low complexity); it reads PKPAAAEAPAASAAPVAAQPKA. Glu-194 contributes to the thiamine diphosphate binding site.

Heterodimer of an alpha and a beta chain. Requires (R)-lipoate as cofactor. Thiamine diphosphate serves as cofactor.

The catalysed reaction is N(6)-[(R)-lipoyl]-L-lysyl-[protein] + pyruvate + H(+) = N(6)-[(R)-S(8)-acetyldihydrolipoyl]-L-lysyl-[protein] + CO2. Its function is as follows. The pyruvate dehydrogenase complex catalyzes the overall conversion of pyruvate to acetyl-CoA and CO(2). It contains multiple copies of three enzymatic components: pyruvate dehydrogenase (E1), dihydrolipoamide acetyltransferase (E2) and lipoamide dehydrogenase (E3). The sequence is that of Pyruvate dehydrogenase E1 component subunit beta (pdhB) from Rhizobium meliloti (strain 1021) (Ensifer meliloti).